We begin with the raw amino-acid sequence, 510 residues long: MIWHVQNENFILDSTRIFMKAFHLPLFDGSFIFPECILIFGLILLLMIDSTSDQKDISWFYFISSTSLVMSITALLFRWREEPMISFSGNFQTNNFNEIFQFLILLCSTLCIPLSVEYIECTEMAITEFLLFILTATLGGMFLCGANDLITIFVALECFSLCSYLLSGYTKKDVRSNEATTKYLLMGGASSSILVHGFSWLYGSSGGEIELQEIVNGLINTQMYNSPGILIALLFITVGIGFKLSPAPSHQWTPDVYEGSPTPVVAFLSVTSKVAASASATRIFDIPFYFSSNEWHLLLEILAILSMILGNLIAITQTSMKRMLAYSSIGQIGYVIIGIIVGDSNGGYASMITYMLFYISMNLGTFACIVSFGLRTGTDNIRDYAGLYTKDPYLALSLALCLLSLGGLPPLSGFFGKLHLFWCGWQAGLYFLVSIGLLTSVVSIYYYLKIIKLLMTGRNQEITPHVRNYRRPPLRSNNSIELSMIVCVIASTIPGISMNPIIEIAQDTLF.

Helical transmembrane passes span L26–L46, I57–F77, I99–I119, M124–C144, L149–Y169, Y183–G203, P227–A247, W295–I315, M323–D343, Y354–L374, A395–F415, L418–L438, and L482–I502.

Belongs to the complex I subunit 2 family. In terms of assembly, NDH is composed of at least 16 different subunits, 5 of which are encoded in the nucleus.

The protein localises to the plastid. Its subcellular location is the chloroplast thylakoid membrane. The enzyme catalyses a plastoquinone + NADH + (n+1) H(+)(in) = a plastoquinol + NAD(+) + n H(+)(out). It catalyses the reaction a plastoquinone + NADPH + (n+1) H(+)(in) = a plastoquinol + NADP(+) + n H(+)(out). In terms of biological role, NDH shuttles electrons from NAD(P)H:plastoquinone, via FMN and iron-sulfur (Fe-S) centers, to quinones in the photosynthetic chain and possibly in a chloroplast respiratory chain. The immediate electron acceptor for the enzyme in this species is believed to be plastoquinone. Couples the redox reaction to proton translocation, and thus conserves the redox energy in a proton gradient. The polypeptide is NAD(P)H-quinone oxidoreductase subunit 2 A, chloroplastic (Glycine max (Soybean)).